We begin with the raw amino-acid sequence, 299 residues long: Nucleotide-binding protein SAV_6292 (299 aa).

Residue 23–30 (GMSGAGRS) coordinates ATP. 74-77 (DVRG) is a binding site for GTP.

It belongs to the RapZ-like family.

Displays ATPase and GTPase activities. This is Nucleotide-binding protein SAV_6292 from Streptomyces avermitilis (strain ATCC 31267 / DSM 46492 / JCM 5070 / NBRC 14893 / NCIMB 12804 / NRRL 8165 / MA-4680).